We begin with the raw amino-acid sequence, 1098 residues long: Error-prone DNA polymerase (1098 aa).

Positions 34-57 (PAFDADGDVPRSRKRGAYQPPGRE) are disordered.

It belongs to the DNA polymerase type-C family. DnaE2 subfamily.

It is found in the cytoplasm. The catalysed reaction is DNA(n) + a 2'-deoxyribonucleoside 5'-triphosphate = DNA(n+1) + diphosphate. Its function is as follows. DNA polymerase involved in damage-induced mutagenesis and translesion synthesis (TLS). It is not the major replicative DNA polymerase. This chain is Error-prone DNA polymerase (dnaE2), found in Mycobacterium tuberculosis (strain CDC 1551 / Oshkosh).